Here is a 120-residue protein sequence, read N- to C-terminus: Large ribosomal subunit protein uL18 (120 aa).

It belongs to the universal ribosomal protein uL18 family. In terms of assembly, part of the 50S ribosomal subunit; part of the 5S rRNA/L5/L18/L25 subcomplex. Contacts the 5S and 23S rRNAs.

In terms of biological role, this is one of the proteins that bind and probably mediate the attachment of the 5S RNA into the large ribosomal subunit, where it forms part of the central protuberance. In Bacillus cereus (strain AH820), this protein is Large ribosomal subunit protein uL18.